A 675-amino-acid polypeptide reads, in one-letter code: MEEISTDPVVPAVKPDPRTSSVGEGANRHENDDGGSGGSEIGAPDLDKDLLCPICMQIIKDAFLTACGHSFCYMCIITHLRNKSDCPCCSQHLTNNQLYPNFLLDKLLKKTSARHVSKTASPLDQFREALQRGCDVSIKEVDNLLTLLAERKRKMEQEEAERNMQILLDFLHCLRKQKVDELNEVQTDLQYIKEDINAVERHRIDLYRARDRYSVKLRMLGDDPSTRNAWPHEKNQIGFNSNSLSIRGGNFVGNYQNKKVEGKAQGSSHGLPKKDALSGSDSQSLNQSTVSMARKKRIHAQFNDLQECYLQKRRQLADQPNSKQENDKSVVRREGYSNGLADFQSVLTTFTRYSRLRVIAEIRHGDIFHSANIVSSIEFDRDDELFATAGVSRCIKVFDFSSVVNEPADMQCPIVEMSTRSKLSCLSWNKHEKNHIASSDYEGIVTVWDVTTRQSLMEYEEHEKRAWSVDFSRTEPSMLVSGSDDCKVKVWCTRQEASVINIDMKANICCVKYNPGSSNYIAVGSADHHIHYYDLRNISQPLHVFSGHKKAVSYVKFLSNNELASASTDSTLRLWDVKDNLPVRTFRGHTNEKNFVGLTVNSEYLACGSETNEVYVYHKEITRPVTSHRFGSPDMDDAEEEAGSYFISAVCWKSDSPTMLTANSQGTIKVLVLAA.

Residues 1–40 (MEEISTDPVVPAVKPDPRTSSVGEGANRHENDDGGSGGSE) are disordered. Zn(2+) is bound by residues Cys-52, Cys-55, Cys-67, His-69, Cys-72, Cys-75, Cys-86, and Cys-89. The RING-type zinc-finger motif lies at 52-90 (CPICMQIIKDAFLTACGHSFCYMCIITHLRNKSDCPCCS). The CLS (cytoplasmic localization signal) stretch occupies residues 67 to 177 (CGHSFCYMCI…LDFLHCLRKQ (111 aa)). Positions 120 to 177 (ASPLDQFREALQRGCDVSIKEVDNLLTLLAERKRKMEQEEAERNMQILLDFLHCLRKQ) are SNLS (subnuclear localization signal). Residues 134–201 (CDVSIKEVDN…IKEDINAVER (68 aa)) are a coiled coil. Positions 261–290 (EGKAQGSSHGLPKKDALSGSDSQSLNQSTV) are disordered. The segment covering 279 to 290 (GSDSQSLNQSTV) has biased composition (polar residues). Residues 294-317 (RKKRIHAQFNDLQECYLQKRRQLA) carry the Bipartite nuclear localization signal motif. 7 WD repeats span residues 369-408 (HSANIVSSIEFDRDDELFATAGVSRCIKVFDFSSVVNEPA), 418-458 (STRS…SLME), 461-501 (EHEK…SVIN), 503-543 (DMKA…QPLH), 547-585 (GHKKAVSYVKFLSNNELASASTDSTLRLWDVKDNLPVRT), 588-627 (GHTNEKNFVGLTVNSEYLACGSETNEVYVYHKEITRPVTS), and 642-675 (AGSYFISAVCWKSDSPTMLTANSQGTIKVLVLAA). A binding of human TRIB1 COP1-binding-motif region spans residues 593–595 (KNF).

In terms of assembly, homodimer. Interacts with HY5, HYH, BBX24/STO, BBX25/STH, CIP8, COP10, SPA1, SPA2, SPA3, SPA4 and UVR8 and phosphorylated PHYA. Light induces dissociation of the SPA1/COP1 complex. Interacts with HRT/RPP8 and triggers it to the 26s proteasome. Binds to CRY2; this competitive interaction prevents triggering to proteasome of other binding proteins. Binds to SHW1 in the nucleus. Bonds to CIP7. Interacts with CSU2. Binds to CIP1. Interacts directly with DHU1. Associates to UNE10/PIF8. Binds directly to PCH1 and PCHL. Autoubiquitinated.

It localises to the nucleus. The protein resides in the cytoplasm. It catalyses the reaction S-ubiquitinyl-[E2 ubiquitin-conjugating enzyme]-L-cysteine + [acceptor protein]-L-lysine = [E2 ubiquitin-conjugating enzyme]-L-cysteine + N(6)-ubiquitinyl-[acceptor protein]-L-lysine.. The protein operates within protein modification; protein ubiquitination. Its function is as follows. E3 ubiquitin-protein ligase that acts as a repressor of photomorphogenesis and as an activator of etiolation in darkness. E3 ubiquitin ligases accept ubiquitin from an E2 ubiquitin-conjugating enzyme in the form of a thioester and then directly transfers the ubiquitin to targeted substrates. Represses photomorphogenesis in darkness by mediating ubiquitination and subsequent proteasomal degradation of light-induced transcription factors such as HY5, HYH and LAF1. Down-regulates MYB21, probably via ubiquitination process. Light stimuli abrogate the repression of photomorphogenesis, possibly due to its localization to the cytoplasm. Could play a role in switching between skotomorphogenetic and photomorphogenetic pathways. Mediates the ubiquitination-dependent degradation of HY5 in the darkness during seedling development (e.g. hypocotyl growth). Represses CIP7 in darkness. Triggers ubiquitination and subsequent protein degradation of UNE10/PIF8, PCH1 and PCHL in the dark. The sequence is that of E3 ubiquitin-protein ligase COP1 from Arabidopsis thaliana (Mouse-ear cress).